The following is a 478-amino-acid chain: ATP-dependent RNA helicase DDX19A (478 aa).

Residue A2 is modified to N-acetylalanine. Residues 2–299 are N-terminal lobe; it reads ATDSWALAVD…DPNIIKLKRE (298 aa). K26 is covalently cross-linked (Glycyl lysine isopeptide (Lys-Gly) (interchain with G-Cter in SUMO1); alternate). A Glycyl lysine isopeptide (Lys-Gly) (interchain with G-Cter in SUMO2); alternate cross-link involves residue K26. The tract at residues 34-53 is disordered; sequence TNGVIKTSTTAEKTEEEEKE. Residue T42 is modified to Phosphothreonine. The N-terminal helix stretch occupies residues 54–67; it reads DRAAQSLLNKLIRS. The short motif at 91 to 119 is the Q motif element; sequence KSFEELRLKPQLLQGVYAMGFNRPSKIQE. Residues Q118 and 137–144 contribute to the ATP site; that span reads SQSGTGKT. Residues 124–294 enclose the Helicase ATP-binding domain; sequence MMLAEPPQNL…QKVVPDPNII (171 aa). Residues 241–244 carry the DEAD box motif; it reads DEAD. The tract at residues 300 to 478 is C-terminal lobe; it reads EETLDTIKQY…DLDEIEKIAN (179 aa). The region spanning 305–473 is the Helicase C-terminal domain; that stretch reads TIKQYYVLCN…RLDTDDLDEI (169 aa). Residues R428 and R431 each coordinate ATP.

The protein belongs to the DEAD box helicase family. DDX19/DBP5 subfamily. As to expression, found in testis, heart, brain, liver, skeletal muscle, and kidney.

It is found in the cytoplasm. Its subcellular location is the nucleus. The protein localises to the nucleoplasm. It catalyses the reaction ATP + H2O = ADP + phosphate + H(+). ATP-dependent RNA helicase involved in mRNA export from the nucleus. Rather than unwinding RNA duplexes, DDX19 functions as a remodeler of ribonucleoprotein particles, whereby proteins bound to nuclear mRNA are dissociated and replaced by cytoplasmic mRNA binding proteins. The protein is ATP-dependent RNA helicase DDX19A (Ddx19a) of Mus musculus (Mouse).